A 237-amino-acid polypeptide reads, in one-letter code: LexA repressor (237 aa).

Positions 1–12 are enriched in polar residues; it reads MPVKDSSSNKKN. The interval 1–20 is disordered; it reads MPVKDSSSNKKNQIGKLSER. The segment at residues 41-61 is a DNA-binding region (H-T-H motif); that stretch reads IREIGDAAGLQSTSSVAYQLK. The span at 67–80 shows a compositional bias: basic and acidic residues; the sequence is GYLRRDPNKPRAVD. A disordered region spans residues 67–112; it reads GYLRRDPNKPRAVDVRALPDPIPSKPGRKPGPKKSSVAISPDPAET. Catalysis depends on for autocatalytic cleavage activity residues Ser-161 and Lys-198.

The protein belongs to the peptidase S24 family. Homodimer.

The enzyme catalyses Hydrolysis of Ala-|-Gly bond in repressor LexA.. Represses a number of genes involved in the response to DNA damage (SOS response), including recA and lexA. In the presence of single-stranded DNA, RecA interacts with LexA causing an autocatalytic cleavage which disrupts the DNA-binding part of LexA, leading to derepression of the SOS regulon and eventually DNA repair. This Corynebacterium diphtheriae (strain ATCC 700971 / NCTC 13129 / Biotype gravis) protein is LexA repressor.